The sequence spans 396 residues: Purine ribonucleoside efflux pump NepI (396 aa).

At 1-21 (MSEFIAENRGANAITRPNWSA) the chain is on the cytoplasmic side. The helical transmembrane segment at 22–42 (VFSVAFCVACLIIVEFLPVSL) threads the bilayer. Residues 43–54 (LTPMAQDLGISE) lie on the Periplasmic side of the membrane. A helical transmembrane segment spans residues 55–75 (GVAGQSVTVTAFVAMFASLFI). Topologically, residues 76-85 (TQTIQATDRR) are cytoplasmic. A helical membrane pass occupies residues 86 to 106 (YVVILFAVLLTLSCLLVSFAN). Residue Ser-107 is a topological domain, periplasmic. A helical membrane pass occupies residues 108–128 (FSLLLIGRACLGLALGGFWAM). At 129–147 (SASLTMRLVPPRTVPKALS) the chain is on the cytoplasmic side. A helical membrane pass occupies residues 148–168 (VIFGAVSIALVIAAPLGSFLG). Residues 169–175 (ELIGWRN) lie on the Periplasmic side of the membrane. A helical transmembrane segment spans residues 176 to 196 (VFNAAAAMGVLCIFWIIKSLP). Residues 197–215 (SLPGEPSHQKQNTFRLLQR) lie on the Cytoplasmic side of the membrane. Residues 216–236 (PGVMAGMIAIFMSFAGQFAFF) form a helical membrane-spanning segment. The Periplasmic portion of the chain corresponds to 237–255 (TYIRPVYMNLAGFGVDGLT). Residues 256-276 (LVLLSFGIASFVGTSLSSFIL) traverse the membrane as a helical segment. The Cytoplasmic segment spans residues 277-281 (KRSVK). The chain crosses the membrane as a helical span at residues 282 to 302 (LALAGAPFVLALSALVLTLWG). Residues 303–305 (SYK) are Periplasmic-facing. A helical transmembrane segment spans residues 306–326 (IVATGVAIIWGLTFALIPVGW). The Cytoplasmic segment spans residues 327-343 (STWITRSLADQAEKAGS). The chain crosses the membrane as a helical span at residues 344-364 (IQVAVIQLANTCGAAIGGYAL). The Periplasmic segment spans residues 365-366 (DN). The chain crosses the membrane as a helical span at residues 367–387 (IGLTSPLMLSGTLMLLTALLV). Residues 388-396 (TAKVKMKKS) are Cytoplasmic-facing.

The protein belongs to the major facilitator superfamily. DHA1 family. NepI (TC 2.A.1.2.26) subfamily.

The protein localises to the cell inner membrane. The catalysed reaction is inosine(in) + H(+)(out) = inosine(out) + H(+)(in). It catalyses the reaction guanosine(in) + H(+)(out) = guanosine(out) + H(+)(in). In terms of biological role, involved in the efflux of purine ribonucleosides, such as inosine and guanosine. The protein is Purine ribonucleoside efflux pump NepI of Escherichia coli O6:H1 (strain CFT073 / ATCC 700928 / UPEC).